A 407-amino-acid polypeptide reads, in one-letter code: Peptidase T (407 aa).

H77 is a binding site for Zn(2+). The active site involves D79. A Zn(2+)-binding site is contributed by D138. Catalysis depends on E172, which acts as the Proton acceptor. The Zn(2+) site is built by E173, D195, and H377.

It belongs to the peptidase M20B family. It depends on Zn(2+) as a cofactor.

The protein resides in the cytoplasm. The enzyme catalyses Release of the N-terminal residue from a tripeptide.. In terms of biological role, cleaves the N-terminal amino acid of tripeptides. The polypeptide is Peptidase T (Aeromonas salmonicida (strain A449)).